The following is a 162-amino-acid chain: Selenoprotein F (162 aa).

Residues 1-28 form the signal peptide; the sequence is MAAEPGGWLGPALGLRLLLATALQMVSA. Sec93 is a non-standard amino acid (selenocysteine).

This sequence belongs to the selenoprotein M/F family. In terms of assembly, forms a tight complex with UGGT1/UGCGL1. Interacts with UGGT2/UGCGL2. Interacts with RDH11.

It localises to the endoplasmic reticulum lumen. In terms of biological role, may be involved in redox reactions associated with the formation of disulfide bonds. May contribute to the quality control of protein folding in the endoplasmic reticulum. May regulate protein folding by enhancing the catalytic activity of UGGT1/UGCGL1 and UGGT2/UGCGL2. This chain is Selenoprotein F, found in Sus scrofa (Pig).